The primary structure comprises 136 residues: Immunoglobulin J chain (136 aa).

Disulfide bonds link C12/C100, C71/C91, and C108/C133. An N-linked (GlcNAc...) (complex) asparagine glycan is attached at N48.

As to quaternary structure, part of the secretory IgA (sIgA) complex that consists of two, four or five IgA monomers, and two additional non-Ig polypeptides, namely the JCHAIN and the secretory component (the proteolytic product of PIGR). Part of the secretory IgM (sIgM) complex that consist of five IgM monomers, and two additional non-Ig polypeptides, namely the JCHAIN and the secretory component (the proteolytic product of PIGR). JCHAIN-containing IgM interacts (via CH4 domain) with FCRM (via Ig-like domain).

Its subcellular location is the secreted. In terms of biological role, serves to link two monomer units of either IgM or IgA. In the case of IgM, the J chain-joined dimer is a nucleating unit for the IgM pentamer, and in the case of IgA it induces dimers and/or larger polymers. It also helps to bind these immunoglobulins to secretory component. This chain is Immunoglobulin J chain, found in Oryctolagus cuniculus (Rabbit).